Reading from the N-terminus, the 1345-residue chain is Vascular endothelial growth factor receptor 2 (1345 aa).

The signal sequence occupies residues 1 to 19 (MESKALLAVALWFCVETRA). Residues 20 to 762 (ASVGLPGDFL…EGAQEKTNLE (743 aa)) lie on the Extracellular side of the membrane. Residues Asn-46, Asn-98, Asn-145, Asn-160, and Asn-247 are each glycosylated (N-linked (GlcNAc...) asparagine). Ig-like C2-type domains are found at residues 46 to 111 (NTTL…RDVD), 143 to 209 (NKNK…INDE), 226 to 325 (YDVI…TFVR), 330 to 416 (PFIA…HMVS), 423 to 542 (PQIG…RVIS), 549 to 656 (PEIT…LVKQ), and 665 to 751 (PMIT…TLFI). Cys-53 and Cys-105 are oxidised to a cystine. A disulfide bridge connects residues Cys-152 and Cys-202. Cys-248 and Cys-309 form a disulfide bridge. N-linked (GlcNAc...) asparagine glycans are attached at residues Asn-320, Asn-376, Asn-397, Asn-509, Asn-521, Asn-578, Asn-611, Asn-617, Asn-629, Asn-673, Asn-702, and Asn-719. 2 disulfide bridges follow: Cys-447-Cys-528 and Cys-569-Cys-640. Residues Cys-686 and Cys-735 are joined by a disulfide bond. The helical transmembrane segment at 763-783 (VIILVGTAVIAMFFWLLLVIV) threads the bilayer. The Cytoplasmic segment spans residues 784-1345 (LRTVKRANEG…SGTTLRSPPV (562 aa)). Tyr-799 carries the phosphotyrosine modification. The 329-residue stretch at 832-1160 (LKLGKPLGRG…FSELVEHLGN (329 aa)) folds into the Protein kinase domain. Residues 838-846 (LGRGAFGQV) and Lys-866 contribute to the ATP site. Tyr-949 is subject to Phosphotyrosine; by autocatalysis. A phosphoserine mark is found at Ser-980 and Ser-982. Tyr-994 carries the phosphotyrosine; by autocatalysis modification. A disulfide bridge connects residues Cys-1022 and Cys-1043. The active-site Proton acceptor is the Asp-1026. Residues Tyr-1052, Tyr-1057, Tyr-1173, and Tyr-1212 each carry the phosphotyrosine; by autocatalysis modification. 2 positions are modified to phosphoserine: Ser-1229 and Ser-1233. Position 1236 is a phosphothreonine (Thr-1236). The segment at 1272–1316 (DRNKLSPSFGGMMPSKSRESVASEGSNQTSGYQSGYHSDDTDTTV) is disordered. Residues 1294–1307 (SEGSNQTSGYQSGY) show a composition bias toward polar residues. A phosphotyrosine; by autocatalysis mark is found at Tyr-1303, Tyr-1307, and Tyr-1317.

This sequence belongs to the protein kinase superfamily. Tyr protein kinase family. CSF-1/PDGF receptor subfamily. As to quaternary structure, homodimer in the presence of bound dimeric VEGFA, VEGFC or VEGFD ligands; monomeric in the absence of bound ligands. Can also form heterodimers with FLT1/VEGFR1 and KDR/VEGFR2. Interacts (tyrosine phosphorylated) with LFYN, NCK1, PLCG1. Interacts (tyrosine-phosphorylated active form preferentially) with DAB2IP (via C2 domain and active form preferentially); the interaction occurs at the late phase of VEGFA response and inhibits KDR/VEGFR2 activity. Interacts with SHBSH2D2A/TSAD, GRB2, MYOF, CBL and PDCD6. Interacts (via C-terminus domain) with ERN1 (via kinase domain); the interaction is facilitated in a XBP1 isoform 1- and vascular endothelial growth factor (VEGF)-dependent manner in endothelial cells. Interacts (via juxtamembrane region) with chaperone PDCL3 (via thioredoxin fold region); the interaction leads to increased KDR/VEGFR2 abundance through inhibition of its ubiquitination and degradation. Interacts (tyrosine phosphorylated) with CCDC88A/GIV (via SH2-like region); binding requires autophosphorylation of the KDR/VEGFR2 C-terminal region. Interacts with isoform 2 of BSG. Interacts with SLC31A1; this interaction is induced upon VEGFA stimulation leading to SLC31A1 and KDR subsequent co-internalization to early endosomes, thereby activating KDR downstream signaling in endothelial cells. In terms of processing, N-glycosylated. Ubiquitinated. Tyrosine phosphorylation of the receptor promotes its poly-ubiquitination, leading to its degradation via the proteasome or lysosomal proteases. Post-translationally, autophosphorylated on tyrosine residues upon ligand binding. Autophosphorylation occurs in trans, i.e. one subunit of the dimeric receptor phosphorylates tyrosine residues on the other subunit. Phosphorylation at Tyr-949 is important for interaction with SH2D2A/TSAD and VEGFA-mediated reorganization of the actin cytoskeleton. Phosphorylation at Tyr-1173 is important for interaction with PLCG1 and SHB. Phosphorylation at Tyr-1212 is important for interaction with NCK1 and FYN. Dephosphorylated by PTPRJ at Tyr-799, Tyr-949, Tyr-994, Tyr-1052, Tyr-1057, Tyr-1173 and Tyr-1212. In terms of processing, the inhibitory disulfide bond between Cys-1022 and Cys-1043 may serve as a specific molecular switch for H(2)S-induced modification that regulates KDR/VEGFR2 function. In terms of tissue distribution, expressed in endothelial cells (at protein level). Detected in embryonic endothelial cells, as well as hematopoietic stem and progenitor cells. Detected in vascular endothelium. Expressed at high levels in adult heart, lung, kidney, brain and skeletal muscle, but is also expressed at lower levels in most other adult tissues.

Its subcellular location is the cell junction. It localises to the endoplasmic reticulum. It is found in the cell membrane. The protein localises to the cytoplasm. The protein resides in the nucleus. Its subcellular location is the cytoplasmic vesicle. It localises to the early endosome. It is found in the secreted. The catalysed reaction is L-tyrosyl-[protein] + ATP = O-phospho-L-tyrosyl-[protein] + ADP + H(+). Its activity is regulated as follows. Present in an inactive conformation in the absence of bound ligand. Binding of VEGFA, VEGFC or VEGFD leads to dimerization and activation by autophosphorylation on tyrosine residues. May be regulated by hydrogen sulfide (H(2)S) levels via a sensitive intracellular disulfide bond. In terms of biological role, tyrosine-protein kinase that acts as a cell-surface receptor for VEGFA, VEGFC and VEGFD. Plays an essential role in the regulation of angiogenesis, vascular development, vascular permeability, and embryonic hematopoiesis. Promotes proliferation, survival, migration and differentiation of endothelial cells. Promotes reorganization of the actin cytoskeleton. Isoforms lacking a transmembrane domain, such as isoform 2, may function as decoy receptors for VEGFA, VEGFC and/or VEGFD. Isoform 2 plays an important role as a negative regulator of VEGFA- and VEGFC-mediated lymphangiogenesis by limiting the amount of free VEGFA and/or VEGFC and by preventing their binding to FLT4. Modulates FLT1 and FLT4 signaling by forming heterodimers. Binding of vascular growth factors to isoform 1 leads to the activation of several signaling cascades. Activation of PLCG1 leads to the production of the cellular signaling molecules diacylglycerol and inositol 1,4,5-trisphosphate and the activation of protein kinase C. Mediates activation of MAPK1/ERK2, MAPK3/ERK1 and the MAP kinase signaling pathway, as well as of the AKT1 signaling pathway. Mediates phosphorylation of PIK3R1, the regulatory subunit of phosphatidylinositol 3-kinase, reorganization of the actin cytoskeleton and activation of PTK2/FAK1. Required for VEGFA-mediated induction of NOS2 and NOS3, leading to the production of the signaling molecule nitric oxide (NO) by endothelial cells. Phosphorylates PLCG1. Promotes phosphorylation of FYN, NCK1, NOS3, PIK3R1, PTK2/FAK1 and SRC. The polypeptide is Vascular endothelial growth factor receptor 2 (Mus musculus (Mouse)).